Consider the following 308-residue polypeptide: Ribosomal RNA small subunit methyltransferase H (308 aa).

Residues 34–36 (GGH), aspartate 54, phenylalanine 80, aspartate 101, and glutamine 108 contribute to the S-adenosyl-L-methionine site.

The protein belongs to the methyltransferase superfamily. RsmH family.

The protein resides in the cytoplasm. It carries out the reaction cytidine(1402) in 16S rRNA + S-adenosyl-L-methionine = N(4)-methylcytidine(1402) in 16S rRNA + S-adenosyl-L-homocysteine + H(+). Its function is as follows. Specifically methylates the N4 position of cytidine in position 1402 (C1402) of 16S rRNA. The sequence is that of Ribosomal RNA small subunit methyltransferase H from Ureaplasma urealyticum serovar 10 (strain ATCC 33699 / Western).